The sequence spans 208 residues: Large ribosomal subunit protein uL4 (208 aa).

The interval 54 to 78 (RAEVSHTTKKPWNQKGTGRARAGMS) is disordered.

The protein belongs to the universal ribosomal protein uL4 family. Part of the 50S ribosomal subunit.

One of the primary rRNA binding proteins, this protein initially binds near the 5'-end of the 23S rRNA. It is important during the early stages of 50S assembly. It makes multiple contacts with different domains of the 23S rRNA in the assembled 50S subunit and ribosome. In terms of biological role, forms part of the polypeptide exit tunnel. The sequence is that of Large ribosomal subunit protein uL4 from Methylobacillus flagellatus (strain ATCC 51484 / DSM 6875 / VKM B-1610 / KT).